The sequence spans 408 residues: Aminoacylase-1 (408 aa).

His80 provides a ligand contact to Zn(2+). Residue Asp82 is part of the active site. Asp113 contacts Zn(2+). Residue Glu147 is the Proton acceptor of the active site. 3 residues coordinate Zn(2+): Glu148, Glu175, and His373.

Belongs to the peptidase M20A family. In terms of assembly, homodimer. Interacts with SPHK1. Zn(2+) serves as cofactor.

Its subcellular location is the cytoplasm. It carries out the reaction an N-acyl-L-amino acid + H2O = an L-alpha-amino acid + a carboxylate. The catalysed reaction is N-acetyl-L-methionine + H2O = L-methionine + acetate. The enzyme catalyses N-acetyl-L-glutamine + H2O = L-glutamine + acetate. In terms of biological role, catalyzes the hydrolysis of N-acetylated amino acids to acetate and free amino acids. The sequence is that of Aminoacylase-1 (Acy1) from Mus musculus (Mouse).